Here is a 313-residue protein sequence, read N- to C-terminus: MSSREIRIATRKSALALWQAEYVKARLQEAHPGLVVTLVPMVSRGDKLLDSPLSKIGGKGLFVKELETALLENQADIAVHSMKDVPMDFPEGLGLFCICEREDPRDAFVSNTYASLDELPEGSVVGTSSLRRQAQLLTRRPDLQIRFLRGNVNTRLAKLDAGEYDAIILAAAGLIRLGFEDRISSSISVDDSLPAGGQGAVGIECRSADIEIHALLAPLHHADTASRVTAERALNKHLNGGCQVPIACYAVLEGEQIWLRGLVGEPSGGLLLSAEARGPRASAAELGVQVADALLAQGADDILRAVYGEAGEE.

Position 242 is an S-(dipyrrolylmethanemethyl)cysteine (C242).

The protein belongs to the HMBS family. As to quaternary structure, monomer. Dipyrromethane is required as a cofactor.

It catalyses the reaction 4 porphobilinogen + H2O = hydroxymethylbilane + 4 NH4(+). It functions in the pathway porphyrin-containing compound metabolism; protoporphyrin-IX biosynthesis; coproporphyrinogen-III from 5-aminolevulinate: step 2/4. In terms of biological role, tetrapolymerization of the monopyrrole PBG into the hydroxymethylbilane pre-uroporphyrinogen in several discrete steps. This chain is Porphobilinogen deaminase, found in Pseudomonas fluorescens (strain ATCC BAA-477 / NRRL B-23932 / Pf-5).